Consider the following 250-residue polypeptide: Type III pantothenate kinase (250 aa).

6-13 (DVGNTNTV) contributes to the ATP binding site. Position 103-106 (103-106 (GADR)) interacts with substrate. Catalysis depends on Asp-105, which acts as the Proton acceptor. Residue Asp-125 coordinates K(+). Residue Thr-128 participates in ATP binding. Substrate is bound at residue Thr-180.

It belongs to the type III pantothenate kinase family. Homodimer. It depends on NH4(+) as a cofactor. The cofactor is K(+).

The protein localises to the cytoplasm. It carries out the reaction (R)-pantothenate + ATP = (R)-4'-phosphopantothenate + ADP + H(+). It participates in cofactor biosynthesis; coenzyme A biosynthesis; CoA from (R)-pantothenate: step 1/5. Catalyzes the phosphorylation of pantothenate (Pan), the first step in CoA biosynthesis. The chain is Type III pantothenate kinase from Frankia casuarinae (strain DSM 45818 / CECT 9043 / HFP020203 / CcI3).